We begin with the raw amino-acid sequence, 596 residues long: Nitrite reductase (596 aa).

A signal peptide spans 1–29 (MRQRTPFARPGLLASAALALVLGPLAVAA). Residues 30–76 (QEQAAPPKDPAAALEDHKTKTDNRYEPSLDNLAQQDVAALGAPEGIP) form an N-terminal tail region. Position 46 (histidine 46) interacts with heme c. 2 residues coordinate heme d1: tyrosine 54 and serine 57. The Cytochrome c domain occupies 77–162 (ALSDAQYNEA…ANYLLLDPAA (86 aa)). Heme c contacts are provided by cysteine 94, cysteine 97, histidine 98, lysine 108, and tyrosine 122. Heme d1 contacts are provided by tryptophan 138, arginine 203, histidine 229, arginine 232, arginine 245, arginine 272, tyrosine 292, arginine 420, glutamine 536, and threonine 583. Residues 163 to 596 (PPEFGMKEMR…NVYNTMTDTY (434 aa)) are D1-heme domain.

Homodimer. Heme c serves as cofactor. Heme is required as a cofactor.

The protein resides in the periplasm. The catalysed reaction is nitric oxide + Fe(III)-[cytochrome c] + H2O = Fe(II)-[cytochrome c] + nitrite + 2 H(+). It catalyses the reaction A + NH4(+) + H2O = hydroxylamine + AH2 + H(+). Inactivation of this cytochrome oxidase results in the loss of nitrite and nitric oxide reductase activities, but not of nitrous oxide reductase activity. In Paracoccus denitrificans (strain Pd 1222), this protein is Nitrite reductase (nirS).